The chain runs to 222 residues: Glutathione S-transferase alpha-1 (222 aa).

N-acetylmethionine is present on Met1. Residues 3–83 (GKPVLHYFNA…YIATKYDLYG (81 aa)) enclose the GST N-terminal domain. Lys4 is subject to N6-succinyllysine. Residues Tyr9, Lys45, 54–55 (QV), and 67–68 (QT) contribute to the glutathione site. A GST C-terminal domain is found at 85 to 208 (DMKERALIDM…QPGSQRKLPV (124 aa)).

The protein belongs to the GST superfamily. Alpha family. Homodimer. Homodimer or heterodimer of GSTA1 and GSTA2.

The protein resides in the cytoplasm. The enzyme catalyses RX + glutathione = an S-substituted glutathione + a halide anion + H(+). It catalyses the reaction prostaglandin A2 + glutathione = prostaglandin A2-S-(R)-glutathione. It carries out the reaction prostaglandin J2 + glutathione = prostaglandin J2-S-(R)-glutathione. The catalysed reaction is (13S)-hydroperoxy-(9Z,11E)-octadecadienoate + 2 glutathione = (13S)-hydroxy-(9Z,11E)-octadecadienoate + glutathione disulfide + H2O. The enzyme catalyses androst-5-ene-3,17-dione = androst-4-ene-3,17-dione. Glutathione S-transferase that catalyzes the nucleophilic attack of the sulfur atom of glutathione on the electrophilic groups of a wide range of exogenous and endogenous compounds. Involved in the formation of glutathione conjugates of both prostaglandin A2 (PGA2) and prostaglandin J2 (PGJ2). It also catalyzes the isomerization of D5-androstene-3,17-dione (AD) into D4-androstene-3,17-dione and may therefore play an important role in hormone biosynthesis. Through its glutathione-dependent peroxidase activity toward the fatty acid hydroperoxide (13S)-hydroperoxy-(9Z,11E)-octadecadienoate/13-HPODE it is also involved in the metabolism of oxidized linoleic acid. The polypeptide is Glutathione S-transferase alpha-1 (Gsta1) (Rattus norvegicus (Rat)).